Reading from the N-terminus, the 367-residue chain is tRNA 2-selenouridine synthase (367 aa).

Positions 14–137 (FLNDVPLMDV…LRRFLIDSLE (124 aa)) constitute a Rhodanese domain. The active-site S-selanylcysteine intermediate is the Cys97.

The protein belongs to the SelU family. In terms of assembly, monomer.

It carries out the reaction 5-methylaminomethyl-2-thiouridine(34) in tRNA + selenophosphate + (2E)-geranyl diphosphate + H2O + H(+) = 5-methylaminomethyl-2-selenouridine(34) in tRNA + (2E)-thiogeraniol + phosphate + diphosphate. The catalysed reaction is 5-methylaminomethyl-2-thiouridine(34) in tRNA + (2E)-geranyl diphosphate = 5-methylaminomethyl-S-(2E)-geranyl-thiouridine(34) in tRNA + diphosphate. The enzyme catalyses 5-methylaminomethyl-S-(2E)-geranyl-thiouridine(34) in tRNA + selenophosphate + H(+) = 5-methylaminomethyl-2-(Se-phospho)selenouridine(34) in tRNA + (2E)-thiogeraniol. It catalyses the reaction 5-methylaminomethyl-2-(Se-phospho)selenouridine(34) in tRNA + H2O = 5-methylaminomethyl-2-selenouridine(34) in tRNA + phosphate. Its function is as follows. Involved in the post-transcriptional modification of the uridine at the wobble position (U34) of tRNA(Lys), tRNA(Glu) and tRNA(Gln). Catalyzes the conversion of 2-thiouridine (S2U-RNA) to 2-selenouridine (Se2U-RNA). Acts in a two-step process involving geranylation of 2-thiouridine (S2U) to S-geranyl-2-thiouridine (geS2U) and subsequent selenation of the latter derivative to 2-selenouridine (Se2U) in the tRNA chain. In Marinobacter nauticus (strain ATCC 700491 / DSM 11845 / VT8) (Marinobacter aquaeolei), this protein is tRNA 2-selenouridine synthase.